We begin with the raw amino-acid sequence, 238 residues long: uncharacterized protein (238 aa).

Belongs to the chlamydial CPn_0658/CT_538/TC_0825 family.

This is an uncharacterized protein from Chlamydia muridarum (strain MoPn / Nigg).